Reading from the N-terminus, the 360-residue chain is Phospho-N-acetylmuramoyl-pentapeptide-transferase (360 aa).

A run of 10 helical transmembrane segments spans residues 27 to 47, 73 to 93, 94 to 114, 132 to 152, 168 to 188, 199 to 219, 236 to 256, 263 to 283, 288 to 308, and 338 to 358; these read IVSL…MIAW, TMGG…WANL, SNPY…VGFV, WKYF…YAIG, VMPQ…VGTS, GLAI…AWAT, ASEL…FLWF, VFMG…IAVL, FLLV…ILQV, and VIVR…ATLK.

It belongs to the glycosyltransferase 4 family. MraY subfamily. The cofactor is Mg(2+).

It is found in the cell inner membrane. The enzyme catalyses UDP-N-acetyl-alpha-D-muramoyl-L-alanyl-gamma-D-glutamyl-meso-2,6-diaminopimeloyl-D-alanyl-D-alanine + di-trans,octa-cis-undecaprenyl phosphate = di-trans,octa-cis-undecaprenyl diphospho-N-acetyl-alpha-D-muramoyl-L-alanyl-D-glutamyl-meso-2,6-diaminopimeloyl-D-alanyl-D-alanine + UMP. It participates in cell wall biogenesis; peptidoglycan biosynthesis. Catalyzes the initial step of the lipid cycle reactions in the biosynthesis of the cell wall peptidoglycan: transfers peptidoglycan precursor phospho-MurNAc-pentapeptide from UDP-MurNAc-pentapeptide onto the lipid carrier undecaprenyl phosphate, yielding undecaprenyl-pyrophosphoryl-MurNAc-pentapeptide, known as lipid I. The chain is Phospho-N-acetylmuramoyl-pentapeptide-transferase from Pectobacterium carotovorum subsp. carotovorum (strain PC1).